The sequence spans 384 residues: MYTKKPTIPEDVIERAYRGKCTKEDALLLLEGNPFELFELANDLRASTVGDAVSYVVNRNIYITNKCVGNCGFCAYRTEKGYILSVEEILEKAGEARKAGAVEVCIQGGYIPEADIEFYLEIIESVKAEFPDLCIHALSPMEVNYAAGLSGMSVEEALHRLKKSGLDSLTGTSAEILSDRVRKIICPGKINTQQWIDTITAAHKAGISTNSTIMYGHVETLEERLDHVFIIREIQKETGGFTELIPMAFLPYNNPIGEKMIASGKFSTTGLEDLQLIAISRVILHTYVKNIQATWVKLGKKLAQVALQCGANDLGGTLMEDQISTASGGSNGEYVSPAEFEWMIKGAGRTPMQRDTLYRKVEPVIANRVEPLPGLGKTKIGSRD.

A Radical SAM core domain is found at 53–286; sequence VSYVVNRNIY…IAISRVILHT (234 aa). The [4Fe-4S] cluster site is built by Cys-67, Cys-71, and Cys-74.

Belongs to the radical SAM superfamily. CofH family. In terms of assembly, consists of two subunits, CofG and CofH. The cofactor is [4Fe-4S] cluster.

It carries out the reaction 5-amino-6-(D-ribitylamino)uracil + L-tyrosine + S-adenosyl-L-methionine = 5-amino-5-(4-hydroxybenzyl)-6-(D-ribitylimino)-5,6-dihydrouracil + 2-iminoacetate + 5'-deoxyadenosine + L-methionine + H(+). The protein operates within cofactor biosynthesis; coenzyme F0 biosynthesis. Catalyzes the radical-mediated synthesis of 5-amino-5-(4-hydroxybenzyl)-6-(D-ribitylimino)-5,6-dihydrouracil from 5-amino-6-(D-ribitylamino)uracil and L-tyrosine. The polypeptide is 5-amino-6-(D-ribitylamino)uracil--L-tyrosine 4-hydroxyphenyl transferase 2 (Methanosarcina barkeri (strain Fusaro / DSM 804)).